Here is a 70-residue protein sequence, read N- to C-terminus: Large ribosomal subunit protein bL31 (70 aa).

Zn(2+) is bound by residues C16, C18, C37, and C40.

Belongs to the bacterial ribosomal protein bL31 family. Type A subfamily. As to quaternary structure, part of the 50S ribosomal subunit. Zn(2+) serves as cofactor.

Its function is as follows. Binds the 23S rRNA. This Shewanella sp. (strain MR-4) protein is Large ribosomal subunit protein bL31.